Here is a 565-residue protein sequence, read N- to C-terminus: MVFSSPSWVPRIPCEIPDSIPVGQFALEGNTSLPPQCGGRPPFVCAITGKSYSTKVLVDRVEFLSRSLAQELGWSPNEGEPEDKVVGIYSWNTLDFFALCWAVHRLNGICLPLHPFSIVPEVVAHMKRAKCRVIFTCQSLVANTLEAARELSIPGDKIYTTALPEAYLQNPEPIDQFKSVDQLIAEGEKLQRLPPLQWEKGRAKIQVAYYCATSGTSGKQKLAKITHYNFIANVMQVCMHESYAKNGRNEIAFGAIPLTHGYGLNIGHIMVYRGDTYVICPRFDMQLMLKTIERFRVERLYVVPPILAALAANPFLLDLHDLSSVQATVTGAAALDRSIAAKLNKLRPTWKINHAYGLTETGVVATLTSPHDVWHGSSGSLLPSFEIRLVKPDGTDAEGLDEPGEVHFNSPSCFLGYVGDDESNKNTFDEKGWLKSGDIGVFRKSPNGHAHLFILERIKDMIKVKGEQVLPRDIESVLLSHPAVIDAAVIGVPDELSGERAKAYIVRSKTVMEDLDEDDLADEIDEFVQGKLHESHWLHDRIVFLEKLPKSESGKVLKKDLKAMN.

Residues 213–221 (TSGTSGKQK), 354–359 (HAYGLT), aspartate 438, arginine 457, and lysine 555 each bind ATP. The segment at 284-354 (DMQLMLKTIE…KLRPTWKINH (71 aa)) is SBD1. The SBD2 stretch occupies residues 355 to 417 (AYGLTETGVV…FNSPSCFLGY (63 aa)).

The protein belongs to the ATP-dependent AMP-binding enzyme family.

Its pathway is antibiotic biosynthesis. Its function is as follows. Acyl-CoA ligase; part of the gene cluster that mediates the biosynthesis of emericellamides, secondary metabolites acting as antibiotics. The biosynthesis of emericellamides initiates from the highly reducing polyketide synthase easB which catalyzes the formation of the linear polyketide chain. EasB produces several polyketides that can be further processed by the downstream enzymes. The polyketides are released from easB as linear polyketide carboxylic acids, which are converted to CoA thioesters by the acyl-CoA ligase easD. The substrates are then loaded onto the acyltransferase easC, which shuttles them to the first thiolation (T) domain of the nonribosomal peptide synthetase easA. EasA then performs condensation of the polyketides with one glycine, two alanine, one valine and one leucine residues. A last step of cyclization leads to the production of emericellamides. This is Acyl-CoA ligase easD from Emericella nidulans (strain FGSC A4 / ATCC 38163 / CBS 112.46 / NRRL 194 / M139) (Aspergillus nidulans).